A 348-amino-acid polypeptide reads, in one-letter code: Competence protein ComGA (348 aa).

Residue 145–152 coordinates ATP; that stretch reads GATGSGKT.

This sequence belongs to the GSP E family.

Its subcellular location is the cell membrane. Required for uptake of DNA by competent cells. The chain is Competence protein ComGA (comGA) from Halalkalibacterium halodurans (strain ATCC BAA-125 / DSM 18197 / FERM 7344 / JCM 9153 / C-125) (Bacillus halodurans).